The chain runs to 647 residues: Spindle pole body-associated protein VIK1 (647 aa).

A compositionally biased stretch (polar residues) spans 36–51; it reads NTTNTMNGSRPSSMKS. A disordered region spans residues 36–55; sequence NTTNTMNGSRPSSMKSSLAL. Residues 202–350 are a coiled coil; that stretch reads DHEITEEISQ…SKQEKFYNDT (149 aa).

Interacts with KAR3; the interaction is direct.

It is found in the cytoplasm. Its subcellular location is the cytoskeleton. It localises to the microtubule organizing center. The protein resides in the spindle pole body. The protein localises to the nucleus. Together with the minus end-directed microtubule motor KAR3, plays a role in microtubule organization. Recruits KAR3 to microtubules, and together they may stabilize the polymers. The KAR3-VIK1 heterodimer cross-links anti-parallel microtubules. Targets and/or maintains KAR3 at the spindle pole body during vegetative growth. This chain is Spindle pole body-associated protein VIK1 (VIK1), found in Saccharomyces cerevisiae (strain ATCC 204508 / S288c) (Baker's yeast).